We begin with the raw amino-acid sequence, 197 residues long: Imidazoleglycerol-phosphate dehydratase (197 aa).

It belongs to the imidazoleglycerol-phosphate dehydratase family.

It localises to the cytoplasm. It carries out the reaction D-erythro-1-(imidazol-4-yl)glycerol 3-phosphate = 3-(imidazol-4-yl)-2-oxopropyl phosphate + H2O. Its pathway is amino-acid biosynthesis; L-histidine biosynthesis; L-histidine from 5-phospho-alpha-D-ribose 1-diphosphate: step 6/9. The polypeptide is Imidazoleglycerol-phosphate dehydratase (Methylococcus capsulatus (strain ATCC 33009 / NCIMB 11132 / Bath)).